The primary structure comprises 207 residues: Outer-membrane lipoprotein LolB (207 aa).

The signal sequence occupies residues 1–21 (MTLPDFRLIRLLPLASLVLTA). A lipid anchor (N-palmitoyl cysteine) is attached at cysteine 22. Cysteine 22 carries S-diacylglycerol cysteine lipidation.

This sequence belongs to the LolB family. As to quaternary structure, monomer.

The protein localises to the cell outer membrane. In terms of biological role, plays a critical role in the incorporation of lipoproteins in the outer membrane after they are released by the LolA protein. This chain is Outer-membrane lipoprotein LolB, found in Salmonella typhi.